A 92-amino-acid chain; its full sequence is N(2)-fixation sustaining protein CowN (92 aa).

The protein belongs to the CowN family.

Its function is as follows. Is required to sustain N(2)-dependent growth in the presence of low levels of carbon monoxide (CO). Probably acts by protecting the N(2) fixation ability of the nitrogenase complex, which is inactivated in the presence of CO. In Rhodobacter capsulatus (strain ATCC BAA-309 / NBRC 16581 / SB1003), this protein is N(2)-fixation sustaining protein CowN.